Reading from the N-terminus, the 203-residue chain is Suppressor of RNA silencing p3 (203 aa).

It belongs to the tenuiviruses p3 protein family. In terms of assembly, homodimer.

The protein resides in the host cytoplasm. Acts as a suppressor of RNA-mediated gene silencing, also known as post-transcriptional gene silencing (PTGS), presumably through the binding of dsRNA. This is Suppressor of RNA silencing p3 from Oryza sativa (Rice).